Here is a 354-residue protein sequence, read N- to C-terminus: Guanine nucleotide-binding protein G(o) subunit alpha (354 aa).

Gly-2 carries the N-myristoyl glycine lipid modification. A lipid anchor (S-palmitoyl cysteine) is attached at Cys-3. Residues 32–354 (KDIKLLLLGA…ANNLRGCGLY (323 aa)) enclose the G-alpha domain. The tract at residues 35 to 48 (KLLLLGAGESGKST) is G1 motif. Residues 40 to 47 (GAGESGKS), 176 to 182 (LRTRVKT), 201 to 205 (DVGGQ), 270 to 273 (NKKD), and Ala-326 each bind GTP. Mg(2+) contacts are provided by Ser-47 and Thr-182. The G2 motif stretch occupies residues 174–182 (DILRTRVKT). The interval 197 to 206 (FKLFDVGGQR) is G3 motif. Residues 266-273 (ILFLNKKD) are G4 motif. Positions 324-329 (TCATDT) are G5 motif.

Belongs to the G-alpha family. G(i/o/t/z) subfamily. In terms of assembly, g proteins are composed of 3 units; alpha, beta and gamma. The alpha chain contains the guanine nucleotide binding site. Interacts (in GDP-bound form) with gpr-1; gpr-1 forms a complex with gpr-2 and lin-5. Interacts (in GDP-bound form) with gpb-1. Interacts (in GDP-bound form) with gbas-1 (via GBA motif); the interaction leads to activation of goa-1. In terms of tissue distribution, expressed in the ASER neuron and the intestine.

In terms of biological role, guanine nucleotide-binding proteins (G proteins) are involved as modulators or transducers in various transmembrane signaling systems. In the 1-cell embryo, probably together with gpa-16, controls nuclear rotation and spindle elongation during mitosis. During the first embryonic cell divisions, plays a role in gpr-1/2 cortical localization and in the proper orientation of EMS blastomere mitotic spindle. Polarity determinants (par genes) may regulate lin-5/gpr-1/gpr-2/goa-1 locally to create the asymmetric forces that drive spindle movement. Involved in chemosensory responses to attractive and repellent odors detected by AWC and AWB sensory neurons, respectively. In ASER neurons, acts downstream of glr-3 to regulate cold avoidance behavior via calcium signaling, and it may also play a role in sensing cold in the intestine. Negatively regulates axon regeneration after injury downstream of the inhibitory compound arachidonoyl ethanolamide (AEA) by antagonizing the activation of the JNK pathway (mlk-1/mek-1/kgb-1). In neurons, may negatively regulate diacylglycerol (DAG) production mediated by egl-30 signaling cascade and thereby negatively regulates acetylcholine release. Couples to the muscarinic acetylcholine receptor gar-2 to negatively regulate cholinergic receptor activity in the presence of high levels of acetylcholine in ventral cord motor neurons. Plays a role in the navigational capacity of sperm and the targeting of sperm derived from males to the fertilization site in the uterus of hermaphrodites. Involved in egg-laying and in regulating dopamine-mediated locomotion. Most likely couples to the dopamine receptors dop-2 and dop-3 to positively regulate the dopamine-mediated suppression of crh-1/CREB1 transcription factor activation in cholinergic SIA neurons in the presence of food. The protein is Guanine nucleotide-binding protein G(o) subunit alpha of Caenorhabditis elegans.